Here is a 275-residue protein sequence, read N- to C-terminus: Dermonecrotic toxin SpeSicTox-betaIIA1 (275 aa).

The active site involves H5. Mg(2+)-binding residues include E25 and D27. Residue H41 is the Nucleophile of the active site. 2 disulfides stabilise this stretch: C45-C51 and C47-C190. D85 contacts Mg(2+).

Belongs to the arthropod phospholipase D family. Class II subfamily. The cofactor is Mg(2+). Expressed by the venom gland.

Its subcellular location is the secreted. The enzyme catalyses an N-(acyl)-sphingosylphosphocholine = an N-(acyl)-sphingosyl-1,3-cyclic phosphate + choline. It carries out the reaction an N-(acyl)-sphingosylphosphoethanolamine = an N-(acyl)-sphingosyl-1,3-cyclic phosphate + ethanolamine. It catalyses the reaction a 1-acyl-sn-glycero-3-phosphocholine = a 1-acyl-sn-glycero-2,3-cyclic phosphate + choline. The catalysed reaction is a 1-acyl-sn-glycero-3-phosphoethanolamine = a 1-acyl-sn-glycero-2,3-cyclic phosphate + ethanolamine. Its function is as follows. Dermonecrotic toxins cleave the phosphodiester linkage between the phosphate and headgroup of certain phospholipids (sphingolipid and lysolipid substrates), forming an alcohol (often choline) and a cyclic phosphate. This toxin acts on sphingomyelin (SM). It may also act on ceramide phosphoethanolamine (CPE), lysophosphatidylcholine (LPC) and lysophosphatidylethanolamine (LPE), but not on lysophosphatidylserine (LPS), and lysophosphatidylglycerol (LPG). It acts by transphosphatidylation, releasing exclusively cyclic phosphate products as second products. Induces dermonecrosis, hemolysis, increased vascular permeability, edema, inflammatory response, and platelet aggregation. In Sicarius peruensis (Six-eyed sand spider), this protein is Dermonecrotic toxin SpeSicTox-betaIIA1.